The following is a 427-amino-acid chain: Glutamyl-tRNA reductase (427 aa).

Substrate is bound by residues 48 to 51, Ser-99, 104 to 106, and Gln-110; these read TCNR and EDQ. The active-site Nucleophile is Cys-49. 179 to 184 contributes to the NADP(+) binding site; that stretch reads GAGEMG.

The protein belongs to the glutamyl-tRNA reductase family. As to quaternary structure, homodimer.

The catalysed reaction is (S)-4-amino-5-oxopentanoate + tRNA(Glu) + NADP(+) = L-glutamyl-tRNA(Glu) + NADPH + H(+). It functions in the pathway porphyrin-containing compound metabolism; protoporphyrin-IX biosynthesis; 5-aminolevulinate from L-glutamyl-tRNA(Glu): step 1/2. In terms of biological role, catalyzes the NADPH-dependent reduction of glutamyl-tRNA(Glu) to glutamate 1-semialdehyde (GSA). The chain is Glutamyl-tRNA reductase from Methanocella arvoryzae (strain DSM 22066 / NBRC 105507 / MRE50).